A 216-amino-acid polypeptide reads, in one-letter code: MQAGKPVLYSYFRSSCSWRVRIALALKGIDYEIVPINLIKDGGQQFSEEFQTLNPMKQVPALKIDGITIGQSLAILEYLEETRPIPRLLPQDPQKRAIVRMISDLIASGIQPLQNLSVLKQVGQENQMPWAQKAITSGFNALEKILQSTAGKYCVGDEVSMADVCLAPQVANAERFKVDLSPYPTISHINKALLALEAFQVSHPCRQPDTPAELRT.

N-acetylmethionine is present on methionine 1. The 84-residue stretch at glycine 4–arginine 87 folds into the GST N-terminal domain. Residues serine 14–arginine 19 and glutamine 45 contribute to the glutathione site. Lysine 57 carries the N6-succinyllysine modification. Glutathione contacts are provided by residues valine 59, glutamine 71–serine 72, glutamine 111, and asparagine 115–serine 117. In terms of domain architecture, GST C-terminal spans aspartate 92 to alanine 212. Threonine 136 carries the phosphothreonine modification. Serine 137 bears the Phosphoserine mark. Lysine 177 carries the N6-succinyllysine modification. Serine 181 carries the phosphoserine modification.

The protein belongs to the GST superfamily. Zeta family. In terms of assembly, homodimer. The cofactor is glutathione. In terms of processing, the N-terminus is blocked.

It is found in the cytoplasm. The enzyme catalyses 4-maleylacetoacetate = 4-fumarylacetoacetate. The catalysed reaction is RX + glutathione = an S-substituted glutathione + a halide anion + H(+). The protein operates within amino-acid degradation; L-phenylalanine degradation; acetoacetate and fumarate from L-phenylalanine: step 5/6. Functionally, probable bifunctional enzyme showing minimal glutathione-conjugating activity with ethacrynic acid and 7-chloro-4-nitrobenz-2-oxa-1, 3-diazole and maleylacetoacetate isomerase activity. Also has low glutathione peroxidase activity with t-butyl and cumene hydroperoxides. Is able to catalyze the glutathione dependent oxygenation of dichloroacetic acid to glyoxylic acid. The protein is Maleylacetoacetate isomerase (Gstz1) of Rattus norvegicus (Rat).